Here is a 206-residue protein sequence, read N- to C-terminus: FMN-dependent NADH:quinone oxidoreductase 1 (206 aa).

Residues S9, 15–17 (SVS), and 139–142 (SRGG) each bind FMN.

This sequence belongs to the azoreductase type 1 family. In terms of assembly, homodimer. FMN serves as cofactor.

The catalysed reaction is 2 a quinone + NADH + H(+) = 2 a 1,4-benzosemiquinone + NAD(+). It carries out the reaction N,N-dimethyl-1,4-phenylenediamine + anthranilate + 2 NAD(+) = 2-(4-dimethylaminophenyl)diazenylbenzoate + 2 NADH + 2 H(+). In terms of biological role, quinone reductase that provides resistance to thiol-specific stress caused by electrophilic quinones. Its function is as follows. Also exhibits azoreductase activity. Catalyzes the reductive cleavage of the azo bond in aromatic azo compounds to the corresponding amines. This is FMN-dependent NADH:quinone oxidoreductase 1 from Cupriavidus pinatubonensis (strain JMP 134 / LMG 1197) (Cupriavidus necator (strain JMP 134)).